The sequence spans 705 residues: Effector protein hopD1 (705 aa).

Composition is skewed to polar residues over residues 1-11 and 28-41; these read MNPLRSIQHNI and QAQQSHPKRISPSQ. 2 disordered regions span residues 1–41 and 173–207; these read MNPL…SPSQ and SSSLETPLLSSPDHSRPPSQPKPVHIGSVRRDSGS. The span at 173-184 shows a compositional bias: low complexity; the sequence is SSSLETPLLSSP.

The protein resides in the secreted. Functionally, effector protein involved in non-host recognition. This Pseudomonas syringae pv. tomato (strain ATCC BAA-871 / DC3000) protein is Effector protein hopD1 (hopD1).